The primary structure comprises 357 residues: MGKVLEKEAFGLAAKDESGILSPFSFSRRATGEKDVRFKVLFCGICHTDLSMAKNEWGLTTYPLVPGHEIVGVVTEVGAKVKKFNAGDKVGVGYMAGSCRSCDSCNDGDENYCPKMILTSGAKNFDDTMTHGGYSDHMVCAEDFIIRIPDNLPLDGAAPLLCAGVTVYSPMKYHGLDKPGMHIGVVGLGGLGHVAVKFAKAMGTKVTVISTSERKRDEAVTRLGADAFLVSRDPKQMKDAMGTMDGIIDTVSATHPLLPLLGLLKNKGKLVMVGAPAEPLELPVFPLIFGRKMVVGSMVGGIKETQEMVDLAGKHNITADIELISADYVNTAMERLAKADVKYRFVIDVANTMKPTP.

Zn(2+) is bound at residue C46. An NADP(+)-binding site is contributed by T48. Residues H68, E69, C99, C102, C105, C113, and C162 each contribute to the Zn(2+) site. NADP(+) is bound by residues T166, 187 to 192 (GLGGLG), 210 to 215 (STSERK), T250, G274, and 297 to 299 (SMV).

Belongs to the zinc-containing alcohol dehydrogenase family. Homodimer. Zn(2+) is required as a cofactor. As to expression, expressed in the differentiation and elongation zones of primary and lateral roots. Expressed in the hypocotyl, cotyledon and leaf veins, hydathodes and trichomes. In stems, expressed in the vascular cambium region. Expressed in the style, anthers, stamen filaments, vascular tissues of sepals and stigmatic regions in flowers, and abscission, style and stigmatic regions of siliques and seed testa.

It catalyses the reaction (E)-cinnamyl alcohol + NADP(+) = (E)-cinnamaldehyde + NADPH + H(+). It functions in the pathway aromatic compound metabolism; phenylpropanoid biosynthesis. Its function is as follows. Involved in lignin biosynthesis. Catalyzes the final step specific for the production of lignin monomers. Catalyzes the NADPH-dependent reduction of coniferaldehyde, 5-hydroxyconiferaldehyde, sinapaldehyde, 4-coumaraldehyde and caffeyl aldehyde to their respective alcohols. The protein is Cinnamyl alcohol dehydrogenase 7 (CAD7) of Arabidopsis thaliana (Mouse-ear cress).